We begin with the raw amino-acid sequence, 280 residues long: Late embryogenesis abundant protein M17 (280 aa).

A signal peptide spans 1 to 22 (MGNLKSLVLLALLFSFSVAVFA). Residue Asn-23 is glycosylated (N-linked (GlcNAc...) asparagine). Tandem repeats lie at residues 76–97 (GGCR…CCRS) and 131–152 (GGCR…CCRS). The 4 X 22 AA repeats, Cys-rich stretch occupies residues 76–262 (GGCRWGCCGG…RGRCRYCCRS (187 aa)). The disordered stretch occupies residues 163 to 184 (VEPNDVEPQQGGRGGGGGGGGG). Residues 173 to 184 (GGRGGGGGGGGG) are compositionally biased toward gly residues. Repeat 3 spans residues 186 to 207 (GGCRWGCCGGWWRGRCRYCCRS). The segment at 218 to 239 (VEPNDVEPQQGGRGGGGGGGGG) is disordered. Gly residues predominate over residues 228-239 (GGRGGGGGGGGG). Repeat 4 spans residues 241 to 262 (GGCRWGCCGGWWRGRCRYCCRS).

In terms of biological role, may be involved in the acquisition of desiccation tolerance during late phase of embryogenesis. This chain is Late embryogenesis abundant protein M17, found in Arabidopsis thaliana (Mouse-ear cress).